The sequence spans 498 residues: MTETSYIMAIDQGTTSSRAIIFDKHGKHIGSSQKEFTQYFPKEGWVEHDANEIWNSVQSVIAGAFIESGIKPVQVAGIGITNQRETTIIWDKKTGKPIYHAIVWQSRQSADIANGLKEAGHEELFHKKTGLIVDSYFSATKIRWILDHVEGAQERAERGELLFGTIDTWLLWKLTDGDAHYTDYSNASRTMLYNIHELKWDEEILKILNIPASMLPEVKSNSEVYGVTKGFHFFGSEVPISGMAGDQQAALFGQMAFEPGMIKNTYGTGSFIVMNTGEKPHISKNNMLTTIGYGINGKVYYALEGSIFVAGSSIQWLRDGLKMLERASDSEEVALQSRSQDEVYVVPAFVGLGAPYWDQEARGAMFGLTRGTTKEDIVKATLQGIAYQVRDVVSTMKEDTGIDMSVLKVDGGAANNEYLMQFQADILNIPIQRAGDLETTALGAAFLAGLAVGFWKDLEELKESYEPGKIFQTQMQEERREELYAGWKKAVNATRAFK.

Position 14 (threonine 14) interacts with ADP. ATP contacts are provided by threonine 14, threonine 15, and serine 16. Residue threonine 14 coordinates sn-glycerol 3-phosphate. An ADP-binding site is contributed by arginine 18. Arginine 84, glutamate 85, and tyrosine 136 together coordinate sn-glycerol 3-phosphate. The glycerol site is built by arginine 84, glutamate 85, and tyrosine 136. Histidine 232 carries the post-translational modification Phosphohistidine; by HPr. Residue aspartate 246 participates in sn-glycerol 3-phosphate binding. Residues aspartate 246 and glutamine 247 each coordinate glycerol. Residues threonine 268 and glycine 311 each contribute to the ADP site. ATP-binding residues include threonine 268, glycine 311, glutamine 315, and glycine 412. Residues glycine 412 and asparagine 416 each coordinate ADP.

This sequence belongs to the FGGY kinase family. As to quaternary structure, homotetramer and homodimer (in equilibrium). Post-translationally, the phosphoenolpyruvate-dependent sugar phosphotransferase system (PTS), including enzyme I, and histidine-containing protein (HPr) are required for the phosphorylation, which leads to the activation of the enzyme.

It carries out the reaction glycerol + ATP = sn-glycerol 3-phosphate + ADP + H(+). The protein operates within polyol metabolism; glycerol degradation via glycerol kinase pathway; sn-glycerol 3-phosphate from glycerol: step 1/1. Its activity is regulated as follows. Activated by phosphorylation and inhibited by fructose 1,6-bisphosphate (FBP). Key enzyme in the regulation of glycerol uptake and metabolism. Catalyzes the phosphorylation of glycerol to yield sn-glycerol 3-phosphate. The protein is Glycerol kinase of Lactococcus lactis subsp. lactis (strain IL1403) (Streptococcus lactis).